A 357-amino-acid chain; its full sequence is 4-hydroxy-3-methylbut-2-en-1-yl diphosphate synthase (flavodoxin) (357 aa).

Residues C264, C267, C299, and E306 each coordinate [4Fe-4S] cluster.

Belongs to the IspG family. The cofactor is [4Fe-4S] cluster.

The enzyme catalyses (2E)-4-hydroxy-3-methylbut-2-enyl diphosphate + oxidized [flavodoxin] + H2O + 2 H(+) = 2-C-methyl-D-erythritol 2,4-cyclic diphosphate + reduced [flavodoxin]. It participates in isoprenoid biosynthesis; isopentenyl diphosphate biosynthesis via DXP pathway; isopentenyl diphosphate from 1-deoxy-D-xylulose 5-phosphate: step 5/6. In terms of biological role, converts 2C-methyl-D-erythritol 2,4-cyclodiphosphate (ME-2,4cPP) into 1-hydroxy-2-methyl-2-(E)-butenyl 4-diphosphate. This Campylobacter jejuni (strain RM1221) protein is 4-hydroxy-3-methylbut-2-en-1-yl diphosphate synthase (flavodoxin).